The following is a 107-amino-acid chain: Virulence factor PGA16 (107 aa).

The N-terminal stretch at 1-18 (MRVFQIVYILIISNLIYA) is a signal peptide. Residues 26 to 56 (SHHHKNDNNIADNTNNNNNNNNNNNNNNITN) form a disordered region. Residues 33–56 (NNIADNTNNNNNNNNNNNNNNITN) show a composition bias toward low complexity. Asn-53 and Asn-56 each carry an N-linked (GlcNAc...) asparagine glycan. The GPI-anchor amidated glycine moiety is linked to residue Gly-76. Positions 77 to 107 (VAAMGGILGQNGWFYGDAGLMAAIFGAMLLL) are cleaved as a propeptide — removed in mature form.

Its subcellular location is the cell membrane. Functionally, cell surface GPI-anchored protein required for virulence. Mediates hyphal ramification which is important for the interaction with host cells. The polypeptide is Virulence factor PGA16 (PGA16) (Candida albicans (strain SC5314 / ATCC MYA-2876) (Yeast)).